The chain runs to 544 residues: CTP synthase (544 aa).

Positions 1 to 265 (MTKFIFVTGG…DNIITEQLQL (265 aa)) are amidoligase domain. Ser13 provides a ligand contact to CTP. A UTP-binding site is contributed by Ser13. Residues 14–19 (SLGKGI) and Asp71 contribute to the ATP site. Residues Asp71 and Glu139 each contribute to the Mg(2+) site. Residues 146–148 (DIE), 186–191 (KTKPTQ), and Lys222 contribute to the CTP site. UTP-binding positions include 186-191 (KTKPTQ) and Lys222. The Glutamine amidotransferase type-1 domain occupies 290–544 (KIAMVGKYVD…VKAALNNKKA (255 aa)). Gly353 is a binding site for L-glutamine. Cys380 serves as the catalytic Nucleophile; for glutamine hydrolysis. Residues 381-384 (LGMQ), Glu404, and Arg471 each bind L-glutamine. Residues His517 and Glu519 contribute to the active site.

The protein belongs to the CTP synthase family. In terms of assembly, homotetramer.

It carries out the reaction UTP + L-glutamine + ATP + H2O = CTP + L-glutamate + ADP + phosphate + 2 H(+). The catalysed reaction is L-glutamine + H2O = L-glutamate + NH4(+). The enzyme catalyses UTP + NH4(+) + ATP = CTP + ADP + phosphate + 2 H(+). It functions in the pathway pyrimidine metabolism; CTP biosynthesis via de novo pathway; CTP from UDP: step 2/2. With respect to regulation, allosterically activated by GTP, when glutamine is the substrate; GTP has no effect on the reaction when ammonia is the substrate. The allosteric effector GTP functions by stabilizing the protein conformation that binds the tetrahedral intermediate(s) formed during glutamine hydrolysis. Inhibited by the product CTP, via allosteric rather than competitive inhibition. In terms of biological role, catalyzes the ATP-dependent amination of UTP to CTP with either L-glutamine or ammonia as the source of nitrogen. Regulates intracellular CTP levels through interactions with the four ribonucleotide triphosphates. The polypeptide is CTP synthase (Neisseria meningitidis serogroup A / serotype 4A (strain DSM 15465 / Z2491)).